A 347-amino-acid polypeptide reads, in one-letter code: Anthranilate phosphoribosyltransferase (347 aa).

5-phospho-alpha-D-ribose 1-diphosphate is bound by residues Gly-82, 85-86, Thr-90, 92-95, 110-118, and Thr-122; these read GD, NIST, and KHGNRAITS. Gly-82 serves as a coordination point for anthranilate. Mg(2+) is bound at residue Ser-94. Residue Asn-113 coordinates anthranilate. Residue Arg-168 participates in anthranilate binding. The Mg(2+) site is built by Asp-226 and Glu-227.

Belongs to the anthranilate phosphoribosyltransferase family. As to quaternary structure, homodimer. It depends on Mg(2+) as a cofactor.

It carries out the reaction N-(5-phospho-beta-D-ribosyl)anthranilate + diphosphate = 5-phospho-alpha-D-ribose 1-diphosphate + anthranilate. The protein operates within amino-acid biosynthesis; L-tryptophan biosynthesis; L-tryptophan from chorismate: step 2/5. Functionally, catalyzes the transfer of the phosphoribosyl group of 5-phosphorylribose-1-pyrophosphate (PRPP) to anthranilate to yield N-(5'-phosphoribosyl)-anthranilate (PRA). The polypeptide is Anthranilate phosphoribosyltransferase (Caulobacter sp. (strain K31)).